The chain runs to 49 residues: Large ribosomal subunit protein bL33A (49 aa).

This sequence belongs to the bacterial ribosomal protein bL33 family.

The polypeptide is Large ribosomal subunit protein bL33A (Geobacillus kaustophilus (strain HTA426)).